A 339-amino-acid chain; its full sequence is Diacylglycerol acyltransferase/mycolyltransferase Ag85A (339 aa).

The signal sequence occupies residues 1–43 (MKLVDRFRGAVTGMPRRLMVGAVGAALLSGLVGFVGGSATASA). A substrate-binding site is contributed by 85–86 (MR). Residues 101–111 (FEWYNQSGISV) are fibronectin-binding. Cysteines 130 and 135 form a disulfide. Residues Ser169 and Asp197 each contribute to the substrate site. The active-site Nucleophile is the Ser169. Glu272 is a catalytic residue. Substrate contacts are provided by residues 274 to 277 (FVRT), Lys281, and 304 to 306 (HDW). The active site involves His304.

The protein belongs to the mycobacterial A85 antigen family. Homodimer.

It localises to the secreted. It is found in the cell wall. The protein localises to the cytoplasm. It carries out the reaction an acyl-CoA + a 1,2-diacyl-sn-glycerol = a triacyl-sn-glycerol + CoA. The catalysed reaction is 2 alpha,alpha'-trehalose 6-mycolate = alpha,alpha'-trehalose 6,6'-bismycolate + alpha,alpha-trehalose. Functionally, the antigen 85 proteins (FbpA, FbpB, FbpC) are responsible for the high affinity of mycobacteria for fibronectin, a large adhesive glycoprotein, which facilitates the attachment of M.tuberculosis to murine alveolar macrophages (AMs). They also help to maintain the integrity of the cell wall by catalyzing the transfer of mycolic acids to cell wall arabinogalactan, and through the synthesis of alpha,alpha-trehalose dimycolate (TDM, cord factor). They catalyze the transfer of a mycoloyl residue from one molecule of alpha,alpha-trehalose monomycolate (TMM) to another TMM, leading to the formation of TDM. FbpA mediates triacylglycerol (TAG) formation with long-chain acyl-CoA as the acyl donor and 1,2-dipalmitoyl-sn-glycerol (1,2-dipalmitin) as the acyl acceptor. It has a preference for C26:0-CoA over C18:1-CoA. The sequence is that of Diacylglycerol acyltransferase/mycolyltransferase Ag85A (fbpA) from Mycobacterium gordonae.